We begin with the raw amino-acid sequence, 221 residues long: Flagellar L-ring protein 1 (221 aa).

The N-terminal stretch at 1–16 (MKRFLILTPMVLALCG) is a signal peptide. C17 is lipidated: N-palmitoyl cysteine. C17 is lipidated: S-diacylglycerol cysteine.

This sequence belongs to the FlgH family. As to quaternary structure, the basal body constitutes a major portion of the flagellar organelle and consists of four rings (L,P,S, and M) mounted on a central rod.

It is found in the cell outer membrane. The protein resides in the bacterial flagellum basal body. In terms of biological role, assembles around the rod to form the L-ring and probably protects the motor/basal body from shearing forces during rotation. This Yersinia pestis protein is Flagellar L-ring protein 1.